A 415-amino-acid polypeptide reads, in one-letter code: Probable cytosolic iron-sulfur protein assembly protein 1 (415 aa).

Residues Ala9–Ser48 form a WD 1 repeat. Residues Ala45–Phe70 form a disordered region. The segment covering Pro54–Ser63 has biased composition (pro residues). 6 WD repeats span residues Thr79–Thr131, Gly160–Glu200, Asp207–Ser246, Gly253–Gly300, Ile335–Glu374, and Ala380–Val415.

This sequence belongs to the WD repeat CIA1 family. In terms of assembly, interacts with NAR1.

The protein resides in the cytoplasm. It is found in the nucleus. Functionally, essential component of the cytosolic iron-sulfur (Fe/S) protein assembly machinery. Required for the maturation of extramitochondrial Fe/S proteins. In Lodderomyces elongisporus (strain ATCC 11503 / CBS 2605 / JCM 1781 / NBRC 1676 / NRRL YB-4239) (Yeast), this protein is Probable cytosolic iron-sulfur protein assembly protein 1.